Here is a 633-residue protein sequence, read N- to C-terminus: Extracellular metalloproteinase 3 (633 aa).

Positions M1–A18 are cleaved as a signal peptide. The propeptide occupies H19–S246. N-linked (GlcNAc...) asparagine glycosylation is present at N410. H429 is a Zn(2+) binding site. The active site involves E430. H433 contacts Zn(2+). Residues N480 and N622 are each glycosylated (N-linked (GlcNAc...) asparagine).

This sequence belongs to the peptidase M36 family. Zn(2+) is required as a cofactor.

The protein resides in the secreted. Secreted metalloproteinase probably acting as a virulence factor. The polypeptide is Extracellular metalloproteinase 3 (MEP3) (Arthroderma benhamiae (Trichophyton mentagrophytes)).